The primary structure comprises 160 residues: MRQVVLNILIAFLWVLFQDEDSFQFSTFVSGFIIGLIVIYILHRFFGQAFYPKKIWIAIKFLGVYLYQLITSSISIINYILFKTRHMNPGLLTYETNLKNDWAITFLTILIIITPGSTVIRISKTTNKFFIHSIDVSEKEKESLLKSIKQYENLITEVSQ.

The next 3 membrane-spanning stretches (helical) occupy residues 22–42 (SFQF…IYIL), 61–81 (FLGV…NYIL), and 102–122 (WAIT…VIRI).

Belongs to the CPA3 antiporters (TC 2.A.63) subunit E family. As to quaternary structure, may form a heterooligomeric complex that consists of seven subunits: mnhA2, mnhB2, mnhC2, mnhD2, mnhE2, mnhF2 and mnhG2.

The protein localises to the cell membrane. The chain is Putative antiporter subunit mnhE2 (mnhE2) from Staphylococcus haemolyticus (strain JCSC1435).